A 608-amino-acid polypeptide reads, in one-letter code: Amino-acid acetyltransferase, mitochondrial (608 aa).

The 203-residue stretch at 402-604 (LNLITEHEKG…DICTRIEPSL (203 aa)) folds into the N-acetyltransferase domain.

Belongs to the acetyltransferase family.

The protein localises to the mitochondrion. It catalyses the reaction L-glutamate + acetyl-CoA = N-acetyl-L-glutamate + CoA + H(+). The protein operates within amino-acid biosynthesis; L-arginine biosynthesis; N(2)-acetyl-L-ornithine from L-glutamate: step 1/4. N-acetylglutamate synthase involved in arginine biosynthesis. The chain is Amino-acid acetyltransferase, mitochondrial (ARG2) from Yarrowia lipolytica (strain CLIB 122 / E 150) (Yeast).